We begin with the raw amino-acid sequence, 281 residues long: Elongation factor 1-delta (281 aa).

A2 bears the N-acetylalanine mark. An N6-acetyllysine modification is found at K17. A phosphoserine mark is found at S37, S44, S60, S86, and S106. The interval 80–115 is leucine-zipper; sequence LIVRIASLEVENQNLRGVVQDLQQAISKLEVRLSTL. At K107 the chain carries N6-acetyllysine. Residues 115-132 show a composition bias toward polar residues; the sequence is LEKSSPTHRATAPQTQHV. The interval 115–172 is disordered; sequence LEKSSPTHRATAPQTQHVSPMRQVEPPAKKGATPAEDDEDNDIDLFGSDEEEEDKEAA. At K117 the chain carries N6-acetyllysine; alternate. The residue at position 117 (K117) is an N6-succinyllysine; alternate. Residue S119 is modified to Phosphoserine. T129 is modified (phosphothreonine). S133 bears the Phosphoserine mark. A Phosphothreonine modification is found at T147. Residues 149–169 show a composition bias toward acidic residues; that stretch reads AEDDEDNDIDLFGSDEEEEDK. S162 is subject to Phosphoserine; by CK2. The tract at residues 173–281 is catalytic (GEF); it reads RLREERLRQY…SVDIAAFNKI (109 aa).

It belongs to the EF-1-beta/EF-1-delta family. As to quaternary structure, EF-1 is composed of 4 subunits: alpha, beta, delta isoform 1, and gamma. Isoform 2 interacts with HSF1 and NFE2L2.

It is found in the nucleus. Functionally, EF-1-beta and EF-1-delta stimulate the exchange of GDP bound to EF-1-alpha to GTP, regenerating EF-1-alpha for another round of transfer of aminoacyl-tRNAs to the ribosome. Regulates induction of heat-shock-responsive genes through association with heat shock transcription factors and direct DNA-binding at heat shock promoter elements (HSE). This is Elongation factor 1-delta (Eef1d) from Rattus norvegicus (Rat).